Consider the following 362-residue polypeptide: Severin (362 aa).

The Gelsolin-like 1 repeat unit spans residues 53 to 102 (FKVVPVPESSYGKFYDGDSYIILHTFKEGNSLKHDIHFFLGTFTTQDEAG). 162–170 (RLLHISGDK) is an a 1,2-diacyl-sn-glycero-3-phospho-(1D-myo-inositol-4,5-bisphosphate) binding site. Gelsolin-like repeat units follow at residues 172 to 212 (AKVA…QEKN) and 280 to 323 (LKFS…NEKK).

This sequence belongs to the villin/gelsolin family.

Its function is as follows. Severin blocks the ends of F-actin and causes the fragmentation and depolymerization of actin filaments in a Ca(2+) dependent manner. The chain is Severin (sevA) from Dictyostelium discoideum (Social amoeba).